We begin with the raw amino-acid sequence, 532 residues long: FAD-dependent monooxygenase hkm7 (532 aa).

FAD is bound by residues 191–193 (RIY) and Asp261.

This sequence belongs to the PheA/TfdB FAD monooxygenase family.

It participates in secondary metabolite biosynthesis. Functionally, FAD-dependent monooxygenase; part of the gene cluster that mediates the biosynthesis of hancockiamides, an unusual new family of N-cinnamoylated piperazines. The NRPS hkm10 and the NmrA-like reductase hkm9 are proposed to convert two molecules of L-Phe to the intermediary piperazine called xenocockiamide A. Xenocockiamide A is then converted to hancockiamide D via a series of hydroxylations and O-methylations. The tyrosinase hkm6 may catalyze an aromatic hydroxylation, then the 2-oxoglutarate-dependent Fe(II) dioxygenase hkm4 and the FAD-dependent phenol hydroxylase hkm7 may catalyze consecutive hydroxylations to install 2 more hydroxy groups, and the methyltransferase hkm8 probably catalyzes two methylations using 2 molecules of S-adenosyl-L-methionine (SAM). The NRPS hkm11 activates and transfers trans-cinnamate supplied by the PAL hkm12 to hancockiamide D and produces hancockiamide A. NRPS Hkm11 has the flexibility to tolerate the bulky hancockiamide G as a substrate and the absence of the acetyl-transferase hkm3 opens up the opportunity for hkm11 to introduce a second N-cinnamoyl moiety. The cytochrome P450 monooxygenase hkm5 catalyzes the methylenedioxy bridge formation, converting hancockiamide A into hancockiamide G. Hkm5 can also convert hancockiamide B into hancockiamide C, and hancockiamide D into hancockiamide H. The N-acetyltransferase hkm3 finally transfers an acetyl group to 1-N of piperazine, converting hancockiamide A into hancockiamide B and hancockiamide G into hancockiamide C. In Aspergillus hancockii, this protein is FAD-dependent monooxygenase hkm7.